The chain runs to 372 residues: Homoserine O-acetyltransferase (372 aa).

An AB hydrolase-1 domain is found at 43-353; that stretch reads NAILIFHALT…DKGHDSFLLK (311 aa). Ser148 acts as the Nucleophile in catalysis. Arg218 lines the substrate pocket. Active-site residues include Asp314 and His347. Asp348 is a substrate binding site.

The protein belongs to the AB hydrolase superfamily. MetX family. In terms of assembly, homodimer.

It is found in the cytoplasm. The enzyme catalyses L-homoserine + acetyl-CoA = O-acetyl-L-homoserine + CoA. Its pathway is amino-acid biosynthesis; L-methionine biosynthesis via de novo pathway; O-acetyl-L-homoserine from L-homoserine: step 1/1. In terms of biological role, transfers an acetyl group from acetyl-CoA to L-homoserine, forming acetyl-L-homoserine. This Pelagibacter ubique (strain HTCC1062) protein is Homoserine O-acetyltransferase.